A 494-amino-acid chain; its full sequence is E3 ubiquitin-protein ligase ari-1.1 (494 aa).

Over residues 1 to 30 (MSSDDEINMDDSDSSQGEIDDGCMSDDDGI) the composition is skewed to acidic residues. Positions 1–52 (MSSDDEINMDDSDSSQGEIDDGCMSDDDGIVLESREQNSSDYKDNGEPDNEV) are disordered. Over residues 33–52 (ESREQNSSDYKDNGEPDNEV) the composition is skewed to basic and acidic residues. The segment at 124–331 (GDAECDICCS…SSWYSCNRFD (208 aa)) is TRIAD supradomain. The Zn(2+) site is built by Cys-128, Cys-131, Cys-142, His-144, Cys-147, Cys-150, Cys-169, Cys-174, Cys-214, Cys-219, Cys-235, Cys-237, Cys-242, Cys-245, His-250, Cys-255, Cys-282, and Cys-285. The RING-type 1 zinc-finger motif lies at 128 to 174 (CDICCSLGELSGLSCNHRACTQCWKAYLTNKIANNAQSEIECMAPNC). The IBR-type zinc finger occupies 194–255 (ATYRKLIVAS…GHDWHEPVNC (62 aa)). The RING-type 2; atypical zinc-finger motif lies at 282 to 313 (CPKCMITIEKDGGCNHMTCKNTACRFEFCWMC). Cys-295 is an active-site residue. Positions 300, 305, 310, 313, 320, and 327 each coordinate Zn(2+). The tract at residues 346–494 (RANLQRYLFY…ADQELWVFNE (149 aa)) is ariadne domain.

This sequence belongs to the RBR family. Ariadne subfamily. As to quaternary structure, interacts with ubiquitin-conjugating enzyme E2 ubc-18.

Its subcellular location is the nucleus. It is found in the cytoplasm. The enzyme catalyses [E2 ubiquitin-conjugating enzyme]-S-ubiquitinyl-L-cysteine + [acceptor protein]-L-lysine = [E2 ubiquitin-conjugating enzyme]-L-cysteine + [acceptor protein]-N(6)-ubiquitinyl-L-lysine.. Its activity is regulated as follows. Autoinhibited by the ariadne domain, which masks the second RING-type zinc finger that contains the active site and inhibits the E3 activity. E3 ubiquitin-protein transferase, which catalyzes ubiquitination of target proteins together with ubiquitin-conjugating enzyme E2 ubc-18. Acts with ubc-18 to regulate pharyngeal development. The sequence is that of E3 ubiquitin-protein ligase ari-1.1 from Caenorhabditis elegans.